A 283-amino-acid chain; its full sequence is tRNA pseudouridine synthase B (283 aa).

Catalysis depends on Asp-38, which acts as the Nucleophile.

The protein belongs to the pseudouridine synthase TruB family. Type 1 subfamily.

It carries out the reaction uridine(55) in tRNA = pseudouridine(55) in tRNA. Its function is as follows. Responsible for synthesis of pseudouridine from uracil-55 in the psi GC loop of transfer RNAs. This is tRNA pseudouridine synthase B from Aster yellows witches'-broom phytoplasma (strain AYWB).